The chain runs to 601 residues: Protein FREE1 (601 aa).

The tract at residues 1–240 (MQQGDYNSYY…SGEYPAFEDS (240 aa)) is disordered. Over residues 21–35 (TPNPNPNPNPSPPAP) the composition is skewed to pro residues. Polar residues-rich tracts occupy residues 63-79 (DYSN…QNSE) and 125-155 (LSSY…QHQT). The segment covering 161–175 (APPPSSAPAPNPNPA) has biased composition (pro residues). The span at 176 to 197 (PYSSSLYSAPPYSSGGSSIPPS) shows a compositional bias: low complexity. Basic and acidic residues predominate over residues 214–231 (NRSRSDLGSDLYGKRSDS). Residue serine 218 is modified to Phosphoserine. The tract at residues 338 to 344 (LDGLRML) is nuclear export signal. Residues 455–515 (DEAVSKCTSC…VCDRCMAEVS (61 aa)) form an FYVE-type zinc finger. Zn(2+)-binding residues include cysteine 461, cysteine 464, cysteine 477, cysteine 480, cysteine 485, cysteine 488, cysteine 507, and cysteine 510. Residues 527 to 552 (RNVSLQSHEDLARKLQEEMERNRKSS) are a coiled coil. 2 positions are modified to phosphoserine: serine 530 and serine 533. A disordered region spans residues 542–561 (QEEMERNRKSSSGLREGSGR).

As to quaternary structure, part of the ESCRT-I complex. Interacts with VPS23A and VPS23B, but not with VPS28 or VPS37. Interacts with IRT1. Interacts with SH3P2. Interacts with SH3P3, but not with SH3P1. Interacts (via N-terminus) with PYL4 and PYR3. Interacts (via C-terminus) with SNRK2D/SNRK2.2, SNRK2I/SNRK2.3, ABF4 and ABI5. Interacts with SINAT1, SINAT2, SINAT3 and SINAT4. Interacts with SINAT5. Component of a phosphoinositide 3-kinase (PI3K) complex containing ATG6, SH3P2 and FREE1. In terms of processing, phosphorylated at Ser-530 and Ser-533 by SNRK2D/SNRK2.2 and SNRK2I/SNRK2.3 in response to abscisic acid (ABA). Phosphorylation is necessary for ABA-induced FREE1 nuclear import. Post-translationally, ubiquitinated by SINAT1, SINAT2, SINAT3 and SINAT4 for subsequent proteasomal degradation. As to expression, ubiquitous. Lowest expression in mature seeds.

It is found in the cytoplasm. Its subcellular location is the prevacuolar compartment membrane. The protein localises to the late endosome. The protein resides in the endosome. It localises to the multivesicular body. It is found in the nucleus. Its function is as follows. Endosomal sorting complex required for transport (ESCRT) component regulating multivesicular body (MVB) protein sorting and plant growth. Required for the formation of intra-luminal vesicles (ILVs)in MVBs. Binds to phosphatidylinositol-3-phosphate (PI3P) and ubiquitin. Controls IRT1 recycling to the plasma membrane and impacts the polar delivery of this transporter to the outer plasma membrane domain. Regulates ubiquitin-dependent membrane protein degradation, vacuolar transport, autophagy, and vacuole biogenesis. ESCRT component that binds ubiquitin and regulates vacuolar sorting of proteins. Attenuates abscisic acid (ABA) signaling through RSL1-triggered degradation of the ABA receptors PYR1 and PYL4. Interacts with PYL4 and PYR1, and delivers the ubiquitinated ABA receptors as cargo to the vacuolar degradation pathway. In response to ABA, is phosphorylated by SnRK2 kinases which mediate FREE1 nuclear import. In the nucleus, interacts with the ABA-responsive transcription factors ABF4 and ABI5 to reduce their ability to bind to their cis-regulatory sequences of downstream genes, thus leading to transcriptional inhibition of ABA signaling pathway. Negatively regulates salt stress tolerance via a negative feedback loop involving ABA signaling pathway. The protein is Protein FREE1 of Arabidopsis thaliana (Mouse-ear cress).